A 161-amino-acid polypeptide reads, in one-letter code: Hydrogenase expression/formation protein HoxO (161 aa).

Belongs to the HupG/HyaE family.

The protein is Hydrogenase expression/formation protein HoxO (hoxO) of Cupriavidus necator (strain ATCC 17699 / DSM 428 / KCTC 22496 / NCIMB 10442 / H16 / Stanier 337) (Ralstonia eutropha).